The chain runs to 401 residues: MVGPGLGINRVRRKGVYSTKKGSGDNLLLMKRQGKHDIHDRESDDLSGHDAFSPSKKRGKIDSITEDEIEVKKLSTVATFDKLSRSFPNSEVQAAKNAALRGKEKEEEKVVSIPLIQNLKNEDIESIKCRNNNLLDGKKLLLEAELSAVEDNQIFSSSFPEDKKLSLQSCLSSKEQIIKKLQVREEYMSKFKLPPMLFSDELLTEVEPFMPIVMDILEGKISSVYYFEAKNAFKNSQKAYLSVDEFRKLNLNKFTAGFYGLKRQLRVGEEIAKRYKRALTHNQPATLKWWGITDFCNYVLAPETLTSFCIYQLNLSNKSCSSKTPNKHPKQQLNEKEYYYDPELRMLAYDLLEDTVEYGIIVADSDPIEQWEAAIEEDRLRELKLDVHNYSSRRWRLDTHD.

Ser23 is modified (phosphoserine). The segment covering 35–48 (KHDIHDRESDDLSG) has biased composition (basic and acidic residues). The interval 35–59 (KHDIHDRESDDLSGHDAFSPSKKRG) is disordered.

Belongs to the RTC4 family.

The protein resides in the cytoplasm. It localises to the nucleus. Functionally, may be involved in a process influencing telomere capping. The polypeptide is Restriction of telomere capping protein 4 (RTC4) (Saccharomyces cerevisiae (strain ATCC 204508 / S288c) (Baker's yeast)).